The sequence spans 303 residues: Sushi domain-containing protein 6 (303 aa).

The N-terminal stretch at 1 to 39 (MCHGRIAPKSTSVFAVASVGHGVFLPLVILCTLLGDGLA) is a signal peptide. The Sushi domain maps to 40-104 (SVCPLPPEPE…KPAMEISCRL (65 aa)). At 40–120 (SVCPLPPEPE…HTSLGVPTLS (81 aa)) the chain is on the extracellular side. Disulfide bonds link cysteine 42/cysteine 89 and cysteine 74/cysteine 102. The helical transmembrane segment at 121 to 141 (IVASTASSVALILLLVVLFVL) threads the bilayer. Residues 142 to 303 (LQPKLKSFHH…TDDIPLLKEA (162 aa)) are Cytoplasmic-facing. Disordered stretches follow at residues 199–237 (VLSE…GQSG) and 263–282 (GSGN…NSDI).

The protein resides in the membrane. May play a role in growth-suppressive activity and cell death. May be involved in the production of chemokine molecules in umbilical vein endothelial cells (HUVECs) cultured in THP1 monocyte LPS-induced medium. Plays a role in preventing tumor onset. The polypeptide is Sushi domain-containing protein 6 (Homo sapiens (Human)).